The chain runs to 172 residues: Translocon-associated protein subunit delta (172 aa).

The signal sequence occupies residues 1–23; the sequence is MAAMASFGALALLLLSGLSCCSE. Residues 24 to 143 lie on the Lumenal side of the membrane; that stretch reads ACLEPQITPS…SVDHRGTWNG (120 aa). A disulfide bond links cysteine 25 and cysteine 56. Lysine 72 participates in a covalent cross-link: Glycyl lysine isopeptide (Lys-Gly) (interchain with G-Cter in ubiquitin). The helical transmembrane segment at 144 to 164 threads the bilayer; sequence PWVSTEVLAAVIGIVIYYLAF. Topologically, residues 165 to 172 are cytoplasmic; that stretch reads SAKSHIQA.

Belongs to the TRAP-delta family. In terms of assembly, heterotetramer of TRAP-alpha, TRAP-beta, TRAP-delta and TRAP-gamma.

The protein localises to the endoplasmic reticulum membrane. Its function is as follows. TRAP proteins are part of a complex whose function is to bind calcium to the ER membrane and thereby regulate the retention of ER resident proteins. This chain is Translocon-associated protein subunit delta (Ssr4), found in Mus musculus (Mouse).